A 644-amino-acid chain; its full sequence is Translation factor GUF1, mitochondrial (644 aa).

A mitochondrion-targeting transit peptide spans 1–14; it reads MLRKAFRYLVPVRC. One can recognise a tr-type G domain in the interval 46-227; the sequence is ERYRNFSIVA…AIVDRIPPPT (182 aa). GTP contacts are provided by residues 55 to 62, 120 to 124, and 174 to 177; these read AHVDHGKS, DTPGH, and NKID.

This sequence belongs to the TRAFAC class translation factor GTPase superfamily. Classic translation factor GTPase family. LepA subfamily.

Its subcellular location is the mitochondrion inner membrane. The catalysed reaction is GTP + H2O = GDP + phosphate + H(+). In terms of biological role, promotes mitochondrial protein synthesis. May act as a fidelity factor of the translation reaction, by catalyzing a one-codon backward translocation of tRNAs on improperly translocated ribosomes. Binds to mitochondrial ribosomes in a GTP-dependent manner. This Eremothecium gossypii (strain ATCC 10895 / CBS 109.51 / FGSC 9923 / NRRL Y-1056) (Yeast) protein is Translation factor GUF1, mitochondrial.